We begin with the raw amino-acid sequence, 656 residues long: Period circadian protein (656 aa).

The segment covering 1–34 (KVSDSAYSNSCSNSQSQRSGSSKSRLSGSHSSGS) has biased composition (low complexity). The interval 1–161 (KVSDSAYSNS…AAQSFPIPSP (161 aa)) is disordered. The Nuclear localization signal motif lies at 53–66 (KRNKDKSRKKKKNK). The span at 53-66 (KRNKDKSRKKKKNK) shows a compositional bias: basic residues. A compositionally biased stretch (basic and acidic residues) spans 108–120 (ELQDQQHGEDHSE). PAS domains lie at 224-359 (DSFC…ATPI) and 377-483 (FAIR…RVFQ). The disordered stretch occupies residues 580–656 (TSIAGTGGTG…SSRGGSTAIP (77 aa)). 26 repeat units span residues 584-585 (GT), 587-588 (GT), 589-590 (GT), 591-592 (GT), 593-594 (GT), 595-596 (GT), 597-598 (GT), 599-600 (GT), 601-602 (GT), 603-604 (GT), 605-606 (GT), 607-608 (GT), 609-610 (GT), 611-612 (GT), 613-614 (GT), 615-616 (GT), 617-618 (GT), 619-620 (GT), 621-622 (GT), 623-624 (GT), 625-626 (GT), 627-628 (GT), 629-630 (GT), 631-632 (GT), 633-634 (GN), and 635-636 (GT). The segment covering 584 to 642 (GTGGTGTGTGTGTGTGTGTGTGTGTGTGTGTGTGTGTGTGTGTGTGTGTGNGTNSGTGT) has biased composition (gly residues). The 30 X 2 AA approximate tandem repeats of G-[TN] stretch occupies residues 584–644 (GTGGTGTGTG…GTNSGTGTGT (61 aa)). The stretch at 637–638 (NS) is one 27; approximate repeat. 3 consecutive repeat copies span residues 639–640 (GT), 641–642 (GT), and 643–644 (GT). Low complexity predominate over residues 643–656 (GTTSSSRGGSTAIP).

Forms a heterodimer with timeless (TIM); the complex then translocates into the nucleus. In terms of processing, phosphorylated with a circadian rhythmicity, probably by the double-time protein (dbt). Phosphorylation could be implicated in the stability of per monomer and in the formation of heterodimer per-tim.

The protein resides in the nucleus. Its subcellular location is the cytoplasm. It is found in the perinuclear region. Essential for biological clock functions. Determines the period length of circadian and ultradian rhythms; an increase in PER dosage leads to shortened circadian rhythms and a decrease leads to lengthened circadian rhythms. Essential for the circadian rhythmicity of locomotor activity, eclosion behavior, and for the rhythmic component of the male courtship song that originates in the thoracic nervous system. The biological cycle depends on the rhythmic formation and nuclear localization of the TIM-PER complex. Light induces the degradation of TIM, which promotes elimination of PER. Nuclear activity of the heterodimer coordinatively regulates PER and TIM transcription through a negative feedback loop. Behaves as a negative element in circadian transcriptional loop. Does not appear to bind DNA, suggesting indirect transcriptional inhibition. This chain is Period circadian protein (per), found in Drosophila simulans (Fruit fly).